A 237-amino-acid polypeptide reads, in one-letter code: 1-(5-phosphoribosyl)-5-[(5-phosphoribosylamino)methylideneamino] imidazole-4-carboxamide isomerase (237 aa).

Aspartate 8 (proton acceptor) is an active-site residue. Aspartate 129 acts as the Proton donor in catalysis.

The protein belongs to the HisA/HisF family.

The protein resides in the cytoplasm. The catalysed reaction is 1-(5-phospho-beta-D-ribosyl)-5-[(5-phospho-beta-D-ribosylamino)methylideneamino]imidazole-4-carboxamide = 5-[(5-phospho-1-deoxy-D-ribulos-1-ylimino)methylamino]-1-(5-phospho-beta-D-ribosyl)imidazole-4-carboxamide. It functions in the pathway amino-acid biosynthesis; L-histidine biosynthesis; L-histidine from 5-phospho-alpha-D-ribose 1-diphosphate: step 4/9. This is 1-(5-phosphoribosyl)-5-[(5-phosphoribosylamino)methylideneamino] imidazole-4-carboxamide isomerase from Acetivibrio thermocellus (strain ATCC 27405 / DSM 1237 / JCM 9322 / NBRC 103400 / NCIMB 10682 / NRRL B-4536 / VPI 7372) (Clostridium thermocellum).